The following is a 263-amino-acid chain: Probable ABC transporter permease protein ycf63 (263 aa).

6 helical membrane-spanning segments follow: residues 43–63 (LVGP…SMVF), 82–102 (AVIV…VIIA), 136–156 (LVFP…TISL), 159–179 (SIAI…SIFL), 199–219 (LCFG…SSGG), and 230–250 (SVVT…YFMF).

It belongs to the MlaE permease family.

Its subcellular location is the plastid. The protein localises to the chloroplast membrane. Could be part of an ABC transporter complex. The polypeptide is Probable ABC transporter permease protein ycf63 (ycf63) (Porphyra purpurea (Red seaweed)).